The sequence spans 505 residues: MAKQKKQPRPKAETPKGFRDYFGAEVVERQTMLRKIGEVYHRYGFDPLETSAVETVEALGKFLPDVDRPNEGVFAFQEDGGSDDGKWLALRYDMTAPLARVAAQFRERPLPGQEDSLPSPYRRYTMGPVWRNEKPGPGRFRQFYQCDADTVGAPSVAADAEICAMLADCLEAVGIERGDYVVRVNNRKVLNGVMEVAGLAGDDKEAARGIVLRAIDKMDRLGAGGVRDLLGDGRKDESGDFTKGAGISSANADKILAFVQATAGDNAATVSNLKSLTEGSDIGTQGVSELEQIASLLAAQGYGPDRIIIDPSVVRGLGYYTGPVYEAELTFDVQNEKGQTVQFGSVAGGGRYDDLVKRFTGQEVPATGVSIGVDRLLAALHATGKLKGEDAGPVIVTVMDRDRMAEYQAMVATLRNAGIRAEVYLGNPKNFGNQLKYADKRRSPVAIIQGSDEAARGVVQLKDLILGAKLAEDATLEEWKSQPAQTEVAVADLVAEVQAIIARHK.

The protein belongs to the class-II aminoacyl-tRNA synthetase family. In terms of assembly, homodimer.

The protein resides in the cytoplasm. It catalyses the reaction tRNA(His) + L-histidine + ATP = L-histidyl-tRNA(His) + AMP + diphosphate + H(+). This is Histidine--tRNA ligase from Jannaschia sp. (strain CCS1).